The primary structure comprises 167 residues: UPF0114 protein in repA1-repA2 intergenic region (167 aa).

Helical transmembrane passes span 15 to 35 (LMFP…LKFF), 53 to 73 (LVLI…LVMV), and 136 to 156 (IILC…MAYI).

It belongs to the UPF0114 family.

The protein resides in the cell membrane. This Buchnera aphidicola subsp. Pterocomma populeum protein is UPF0114 protein in repA1-repA2 intergenic region.